The following is a 268-amino-acid chain: 3-methyl-2-oxobutanoate hydroxymethyltransferase (268 aa).

Mg(2+) contacts are provided by aspartate 46 and aspartate 85. 3-methyl-2-oxobutanoate is bound by residues 46-47, aspartate 85, and lysine 115; that span reads DS. Position 117 (glutamate 117) interacts with Mg(2+). Glutamate 184 acts as the Proton acceptor in catalysis.

It belongs to the PanB family. In terms of assembly, homodecamer; pentamer of dimers. Mg(2+) serves as cofactor.

It localises to the cytoplasm. It carries out the reaction 3-methyl-2-oxobutanoate + (6R)-5,10-methylene-5,6,7,8-tetrahydrofolate + H2O = 2-dehydropantoate + (6S)-5,6,7,8-tetrahydrofolate. The protein operates within cofactor biosynthesis; (R)-pantothenate biosynthesis; (R)-pantoate from 3-methyl-2-oxobutanoate: step 1/2. In terms of biological role, catalyzes the reversible reaction in which hydroxymethyl group from 5,10-methylenetetrahydrofolate is transferred onto alpha-ketoisovalerate to form ketopantoate. This is 3-methyl-2-oxobutanoate hydroxymethyltransferase from Magnetococcus marinus (strain ATCC BAA-1437 / JCM 17883 / MC-1).